A 485-amino-acid polypeptide reads, in one-letter code: Probable high-affinity nitrate transporter 2.4 (485 aa).

A run of 12 helical transmembrane segments spans residues 56 to 76 (WMSL…LPAM), 80 to 100 (LVLA…ATLV), 119 to 139 (GVAS…ASSP), 147 to 167 (FVAG…SRIF), 177 to 197 (AVAA…MPVA), 215 to 235 (VTYL…LAFP), 270 to 290 (AWLL…MENV), 305 to 327 (AAGA…GGVA), 341 to 361 (LWAL…VGRM), 377 to 397 (VACA…VPFV), 405 to 425 (VSGM…RLFF), and 435 to 455 (AISC…LIHF).

It belongs to the major facilitator superfamily. Nitrate/nitrite porter (TC 2.A.1.8) family. In terms of tissue distribution, expressed in the base of the lateral root primordia, root-shoot junction zone, leaves, ends of the husk and vascular tissue of the anthers.

Its subcellular location is the cell membrane. Its function is as follows. Involved in nitrate transport. This Oryza sativa subsp. japonica (Rice) protein is Probable high-affinity nitrate transporter 2.4 (NRT2.4).